The sequence spans 82 residues: Cytotoxin homolog Clbp-3 (82 aa).

Residues 1–21 form the signal peptide; the sequence is MKTLLLTLVVVTIVCLDLGYT. Intrachain disulfides connect cysteine 24–cysteine 43, cysteine 36–cysteine 60, cysteine 64–cysteine 75, and cysteine 76–cysteine 81.

The protein belongs to the three-finger toxin family. Short-chain subfamily. Orphan group XV sub-subfamily. Expressed by the venom gland.

The protein localises to the secreted. The protein resides in the target cell membrane. In terms of biological role, has low cytotoxic activity. This chain is Cytotoxin homolog Clbp-3, found in Naja atra (Chinese cobra).